The following is a 339-amino-acid chain: MDKKIILAIESSCDETAAAVVVNGREVLSNIIASQIDTHKKFGGVVPEVASRMHIEAVDSVVKAALLEAGISIDDVDAIGVTYGPGLVGALLVGLQYAKGLALGSKKPLIGVNHIQGHISANFIEHKDLKPPFVSLVVSGGHTFIVHVKGYRDFEVIGQTRDDAAGEAYDKVARALELGYPGGPKIDKLAKQGNKDAIEFPRAKFQDDTLDFSFSGVKSAVLNYLNKAKMKEEEVNKADIAASFQKAIIDVLKTNLFLTCERKGIKKIAVAGGVASNSCLRETLLEEGRKKGIEILFPSPILCTDNAAMIGSAAYFNYQEGAVSDLNINAKPNLKLGER.

Fe cation contacts are provided by H114 and H118. Substrate-binding positions include 137-141 (VVSGG), D170, G183, D187, and N277. D305 lines the Fe cation pocket.

This sequence belongs to the KAE1 / TsaD family. The cofactor is Fe(2+).

It is found in the cytoplasm. It carries out the reaction L-threonylcarbamoyladenylate + adenosine(37) in tRNA = N(6)-L-threonylcarbamoyladenosine(37) in tRNA + AMP + H(+). In terms of biological role, required for the formation of a threonylcarbamoyl group on adenosine at position 37 (t(6)A37) in tRNAs that read codons beginning with adenine. Is involved in the transfer of the threonylcarbamoyl moiety of threonylcarbamoyl-AMP (TC-AMP) to the N6 group of A37, together with TsaE and TsaB. TsaD likely plays a direct catalytic role in this reaction. The sequence is that of tRNA N6-adenosine threonylcarbamoyltransferase from Clostridium beijerinckii (strain ATCC 51743 / NCIMB 8052) (Clostridium acetobutylicum).